The chain runs to 70 residues: Large ribosomal subunit protein bL31 (70 aa).

Cysteine 16, cysteine 18, cysteine 37, and cysteine 40 together coordinate Zn(2+).

The protein belongs to the bacterial ribosomal protein bL31 family. Type A subfamily. Part of the 50S ribosomal subunit. Requires Zn(2+) as cofactor.

Functionally, binds the 23S rRNA. In Glaesserella parasuis serovar 5 (strain SH0165) (Haemophilus parasuis), this protein is Large ribosomal subunit protein bL31.